Consider the following 228-residue polypeptide: Ribose-5-phosphate isomerase A (228 aa).

Residues 29 to 32 (TGST), 85 to 88 (DGAD), and 98 to 101 (KGGG) contribute to the substrate site. Catalysis depends on Glu107, which acts as the Proton acceptor. Lys125 serves as a coordination point for substrate.

This sequence belongs to the ribose 5-phosphate isomerase family. In terms of assembly, homodimer.

It catalyses the reaction aldehydo-D-ribose 5-phosphate = D-ribulose 5-phosphate. The protein operates within carbohydrate degradation; pentose phosphate pathway; D-ribose 5-phosphate from D-ribulose 5-phosphate (non-oxidative stage): step 1/1. Catalyzes the reversible conversion of ribose-5-phosphate to ribulose 5-phosphate. The sequence is that of Ribose-5-phosphate isomerase A from Staphylococcus aureus (strain COL).